We begin with the raw amino-acid sequence, 227 residues long: 2,3-bisphosphoglycerate-dependent phosphoglycerate mutase (227 aa).

Substrate is bound by residues 8–15, 21–22, Arg58, 110–113, Lys121, 137–138, and 181–182; these read RHGKSVWN, TG, ERMY, RR, and GN. His9 (tele-phosphohistidine intermediate) is an active-site residue. The active-site Proton donor/acceptor is the Glu110.

It belongs to the phosphoglycerate mutase family. BPG-dependent PGAM subfamily.

The catalysed reaction is (2R)-2-phosphoglycerate = (2R)-3-phosphoglycerate. Its pathway is carbohydrate degradation; glycolysis; pyruvate from D-glyceraldehyde 3-phosphate: step 3/5. Its function is as follows. Catalyzes the interconversion of 2-phosphoglycerate and 3-phosphoglycerate. This Chlamydia abortus (strain DSM 27085 / S26/3) (Chlamydophila abortus) protein is 2,3-bisphosphoglycerate-dependent phosphoglycerate mutase.